A 509-amino-acid chain; its full sequence is Cytochrome P450 monooxygenase traB (509 aa).

A helical transmembrane segment spans residues 8–28 (LVELVSITGGLIVLFIAYTGF). Cysteine 453 is a binding site for heme.

This sequence belongs to the cytochrome P450 family. Heme serves as cofactor.

The protein localises to the membrane. It functions in the pathway secondary metabolite biosynthesis. Its function is as follows. Cytochrome P450 monooxygenase; part of the tra gene cluster that produces terrestric acid. The clavatol biosynthesis cluster cla and the terrestric acid cluster tra are both involved in the production of peniphenones and penilactones. The non-reducing PKS claF is responsible for the formation of clavatol from successive condensations of 3 malonyl-CoA units, presumably with a simple acetyl-CoA starter unit, and 2 methylation steps. The esterase claE probably collaborates with claF by catalyzing the hydrolysis of ACP-bound acyl intermediates to free the ACP from stalled intermediates. The clavatol oxidase claD then converts clavatol to hydroxyclavatol. Spontaneous dehydration of hydroxyclavatol leads to the accumulation of the highly active ortho-quinone methide. On the other hand, the PKS-NRPS hybrid traA is involved in the formation of crustosic acid, with the help of traB and traD. The polyketide synthase module (PKS) of traA is responsible for the synthesis of the polyketide backbone via the condensation of an acetyl-CoA starter unit with 3 malonyl-CoA units. The downstream nonribosomal peptide synthetase (NRPS) module then amidates the carboxyl end of the polyketide with L-malic acid. Because traA lacks a designated enoylreductase (ER) domain, the required activity is provided the enoyl reductase traG. Crustosic acid undergoes decarboxylation and isomerization to the terrestric acid, catalyzed by the 2-oxoglutarate-dependent dioxygenase traH. Both acids are further converted to the 2 gamma-butyrolactones (R)-5-methyltetronic acid and (S)-5-carboxylmethyltetronic acid, with involvement of the cytochrome P450 monooxygenase claJ. Spontaneous addition of the methide to these gamma-butyrolactones leads to peniphenone D and penilactone D, which undergo again stereospecific attacking by methide to give penilactones A and B. This is Cytochrome P450 monooxygenase traB from Penicillium crustosum (Blue mold fungus).